Consider the following 67-residue polypeptide: Non-specific lipid-transfer protein 2P (67 aa).

Disulfide bonds link Cys-2–Cys-34, Cys-10–Cys-24, Cys-25–Cys-60, and Cys-36–Cys-67.

Functionally, transfer lipids across membranes. May play a role in plant defense or in the biosynthesis of cuticle layers. In Triticum aestivum (Wheat), this protein is Non-specific lipid-transfer protein 2P.